A 463-amino-acid chain; its full sequence is MVSTHLTSTTLPDCYRSLIVNSELGSSALMDLNSPSFLYPLLHTPADKGTLCTYQAALGKVYASLEVIGVGDDKLQAVHGLNGGKPHRDILGSRITRPTGIKPLCLPRHILAYDWLAQSLLGIVIGSISLAYNELLMMEKLKGFRPFVPHIPFDFYLCEMAFPRVKPAPDETSFSEALLKRNQDLAPNSAEQQIEEVRQVGSYKKGTMTTGHNVADLVVILKILPTFLTMLTNETGFEISSSDATVKILITTVPPNLRKLDPELHLDIKVLQSALAAIRHARWFEENASQSTVKVLIRLLKDLRIRFPGFEPLTPWILDLLGHYAVMNNPTRQPLALNVAYRRCLQILAAGLFLPGSVGITDPCESGNFRVHTVMTLEQQDMVCYTAQTLVRILSHGGFRKILGQEGDASYLASEISTWDGVIVTPSEKAYEKPPEKKEGEEEEENTEEPPQGEEEESMETQE.

At Arg94 the chain carries Asymmetric dimethylarginine; alternate. Arg94 carries the omega-N-methylarginine; alternate modification. In terms of domain architecture, DZF spans 108-444 (RHILAYDWLA…PEKKEGEEEE (337 aa)). Arg145 is modified (omega-N-methylarginine). Lys166 participates in a covalent cross-link: Glycyl lysine isopeptide (Lys-Gly) (interchain with G-Cter in ubiquitin). Ser173 and Ser189 each carry phosphoserine. Residues Lys259 and Lys437 each participate in a glycyl lysine isopeptide (Lys-Gly) (interchain with G-Cter in SUMO2) cross-link. A disordered region spans residues 424–463 (VTPSEKAYEKPPEKKEGEEEEENTEEPPQGEEEESMETQE). Positions 429-440 (KAYEKPPEKKEG) are enriched in basic and acidic residues. The span at 441–463 (EEEEENTEEPPQGEEEESMETQE) shows a compositional bias: acidic residues. Thr461 is modified (phosphothreonine).

In terms of assembly, forms heterodimers with ILF3. ILF2-ILF3 heterodimers may also bind to PRKDC/XRCC7: this may stabilize the interaction of PRKDC/XRCC7 and the heterodimeric complex of G22P1/KU70 and XRCC5/KU80. Forms a complex with ILF3, YLPM1, KHDRBS1, RBMX, NCOA5 and PPP1CA. Identified in a IGF2BP1-dependent mRNP granule complex containing untranslated mRNAs. Interacts with IGF2BP1. Interacts with CRBN; this interaction promotes ubiquitination and subsequent degradation of ILF2. Post-translationally, ubiquitinated at Lys-166 by CRBN with polyubiquitin chains by the CUL4-RING E3 ligase (CRL4-CRBN) and then degraded by the proteasome.

The protein resides in the nucleus. It is found in the nucleolus. It localises to the cytoplasm. In terms of biological role, chromatin-interacting protein that forms a stable heterodimer with interleukin enhancer-binding factor 3/ILF3 and plays a role in several biological processes including transcription, innate immunity or cell growth. Essential for the efficient reshuttling of ILF3 (isoform 1 and isoform 2) into the nucleus. Together with ILF3, forms an RNA-binding complex that is required for mitotic progression and cytokinesis by regulating the expression of a cluster of mitotic genes. Mechanistically, competes with STAU1/STAU2-mediated mRNA decay. Plays also a role in the inhibition of various viruses including Japanese encephalitis virus or enterovirus 71. The sequence is that of Interleukin enhancer-binding factor 2 (Ilf2) from Rattus norvegicus (Rat).